The sequence spans 587 residues: Bifunctional dihydrofolate reductase-thymidylate synthase (587 aa).

A DHFR domain is found at 9–237; it reads DIYAICACCK…TTLDFIIYSK (229 aa). Residue 36-42 coordinates NADP(+); that stretch reads GIGNAGV. Asp51 is a binding site for substrate. Residues 108–110 and 129–132 contribute to the NADP(+) site; these read KKS and LSRT. Residues Ile173, Tyr179, and Thr194 each contribute to the substrate site. 174 to 181 contacts NADP(+); the sequence is GGSSVYKE. The thymidylate synthase stretch occupies residues 301 to 587; the sequence is NHPEYQYLNI…HDKINMDMAA (287 aa). Arg324 provides a ligand contact to dUMP. Residue Cys469 is part of the active site. DUMP is bound by residues His470, 488–492, Asn500, and 530–532; these read QRSCD and HVY.

The protein in the N-terminal section; belongs to the dihydrofolate reductase family. It in the C-terminal section; belongs to the thymidylate synthase family. Homodimer.

The enzyme catalyses (6S)-5,6,7,8-tetrahydrofolate + NADP(+) = 7,8-dihydrofolate + NADPH + H(+). It catalyses the reaction dUMP + (6R)-5,10-methylene-5,6,7,8-tetrahydrofolate = 7,8-dihydrofolate + dTMP. It participates in cofactor biosynthesis; tetrahydrofolate biosynthesis; 5,6,7,8-tetrahydrofolate from 7,8-dihydrofolate: step 1/1. Functionally, bifunctional enzyme. Involved in de novo dTMP biosynthesis. Key enzyme in folate metabolism. Catalyzes an essential reaction for de novo glycine and purine synthesis, DNA precursor synthesis, and for the conversion of dUMP to dTMP. The protein is Bifunctional dihydrofolate reductase-thymidylate synthase of Plasmodium berghei (strain Anka).